The following is a 70-amino-acid chain: Large ribosomal subunit protein bL28 (70 aa).

Belongs to the bacterial ribosomal protein bL28 family.

In Maridesulfovibrio salexigens (strain ATCC 14822 / DSM 2638 / NCIMB 8403 / VKM B-1763) (Desulfovibrio salexigens), this protein is Large ribosomal subunit protein bL28.